The following is a 236-amino-acid chain: Ribose-5-phosphate isomerase A (236 aa).

Substrate is bound by residues 31 to 34 (TGST), 84 to 87 (DGAD), and 97 to 100 (KGGG). Glu106 acts as the Proton acceptor in catalysis. Lys124 is a substrate binding site.

The protein belongs to the ribose 5-phosphate isomerase family. As to quaternary structure, homodimer.

The enzyme catalyses aldehydo-D-ribose 5-phosphate = D-ribulose 5-phosphate. It participates in carbohydrate degradation; pentose phosphate pathway; D-ribose 5-phosphate from D-ribulose 5-phosphate (non-oxidative stage): step 1/1. Its function is as follows. Catalyzes the reversible conversion of ribose-5-phosphate to ribulose 5-phosphate. This chain is Ribose-5-phosphate isomerase A, found in Polynucleobacter asymbioticus (strain DSM 18221 / CIP 109841 / QLW-P1DMWA-1) (Polynucleobacter necessarius subsp. asymbioticus).